Reading from the N-terminus, the 442-residue chain is tRNA modification GTPase MnmE (442 aa).

R27, E84, and K124 together coordinate (6S)-5-formyl-5,6,7,8-tetrahydrofolate. Residues 221–366 (GLHVVIVGAP…LLDALQAFAE (146 aa)) form the TrmE-type G domain. GTP contacts are provided by residues 231-236 (NAGKSS), 250-256 (SKEAGTT), and 275-278 (DTAG). The Mg(2+) site is built by S235 and T256. A (6S)-5-formyl-5,6,7,8-tetrahydrofolate-binding site is contributed by K442.

The protein belongs to the TRAFAC class TrmE-Era-EngA-EngB-Septin-like GTPase superfamily. TrmE GTPase family. In terms of assembly, homodimer. Heterotetramer of two MnmE and two MnmG subunits. K(+) is required as a cofactor.

The protein localises to the cytoplasm. Its function is as follows. Exhibits a very high intrinsic GTPase hydrolysis rate. Involved in the addition of a carboxymethylaminomethyl (cmnm) group at the wobble position (U34) of certain tRNAs, forming tRNA-cmnm(5)s(2)U34. This chain is tRNA modification GTPase MnmE, found in Brucella canis (strain ATCC 23365 / NCTC 10854 / RM-666).